The following is a 67-amino-acid chain: Large ribosomal subunit protein bL35 (67 aa).

The protein belongs to the bacterial ribosomal protein bL35 family.

The polypeptide is Large ribosomal subunit protein bL35 (Agrobacterium fabrum (strain C58 / ATCC 33970) (Agrobacterium tumefaciens (strain C58))).